A 134-amino-acid chain; its full sequence is Cytochrome b (134 aa).

Transmembrane regions (helical) follow at residues 33-53, 77-98, and 113-133; these read FGSLLGVCLAVQILTGVFLAM, WVLRYLHANGASMFFICLYVHV, and WNVGILLLFAVMATAFMGYVL. Residues H83 and H97 each coordinate heme b.

It belongs to the cytochrome b family. As to quaternary structure, the cytochrome bc1 complex contains 11 subunits: 3 respiratory subunits (MT-CYB, CYC1 and UQCRFS1), 2 core proteins (UQCRC1 and UQCRC2) and 6 low-molecular weight proteins (UQCRH/QCR6, UQCRB/QCR7, UQCRQ/QCR8, UQCR10/QCR9, UQCR11/QCR10 and a cleavage product of UQCRFS1). This cytochrome bc1 complex then forms a dimer. The cofactor is heme b.

Its subcellular location is the mitochondrion inner membrane. Functionally, component of the ubiquinol-cytochrome c reductase complex (complex III or cytochrome b-c1 complex) that is part of the mitochondrial respiratory chain. The b-c1 complex mediates electron transfer from ubiquinol to cytochrome c. Contributes to the generation of a proton gradient across the mitochondrial membrane that is then used for ATP synthesis. The protein is Cytochrome b (MT-CYB) of Anoura caudifer (Hairy-legged long-tongued bat).